A 430-amino-acid polypeptide reads, in one-letter code: Sphingosine-1-phosphate phosphatase 1 (430 aa).

Residues 34–100 form a disordered region; sequence GSPKAGEDAE…PRRAGSLRRN (67 aa). Phosphoserine is present on Ser101. Thr103 is modified (phosphothreonine). Transmembrane regions (helical) follow at residues 121–141, 152–172, 193–213, and 216–236; these read FCFGTELGNELFYIIFFPFWI, LVIIWVLVMYLGQCTKDIIRW, MPSTHAMSGTAIPIAMILLTY, and WQYPLIYGLILIPCWSSLVCL. Residues 167 to 175 are phosphatase sequence motif I; that stretch reads KDIIRWPRP. Positions 194-197 are phosphatase sequence motif II; that stretch reads PSTH. The active-site Proton donor is the His197. Residues 237 to 248 form a phosphatase sequence motif III region; sequence SRIYMGMHSILD. His244 (nucleophile) is an active-site residue. 5 helical membrane passes run 246 to 266, 279 to 299, 311 to 331, 348 to 368, and 409 to 429; these read ILDVIAGFLYTILILIIFYPL, YAPLIIIGLHLILGIFSFTLD, ILGSGAGIACGSHAAYNLGIS, VTLFGKAILRVVIGMLLVLFV, and YGTVGFSITFLIPYIFSFIGI.

Belongs to the type 2 lipid phosphate phosphatase family.

The protein resides in the endoplasmic reticulum membrane. It is found in the cell membrane. The enzyme catalyses sphinganine 1-phosphate + H2O = sphinganine + phosphate. It catalyses the reaction sphing-4-enine 1-phosphate + H2O = sphing-4-enine + phosphate. In terms of biological role, specifically dephosphorylates sphingosine 1-phosphate (S1P), dihydro-S1P, and phyto-S1P. Does not act on ceramide 1-phosphate, lysophosphatidic acid or phosphatidic acid. Sphingosine-1-phosphate phosphatase activity is needed for efficient recycling of sphingosine into the sphingolipid synthesis pathway. Regulates the intracellular levels of the bioactive sphingolipid metabolite S1P that regulates diverse biological processes acting both as an extracellular receptor ligand or as an intracellular second messenger. Involved in efficient ceramide synthesis from exogenous sphingoid bases. Converts S1P to sphingosine, which is readily metabolized to ceramide via ceramide synthase. In concert with sphingosine kinase 2 (SphK2), recycles sphingosine into ceramide through a phosphorylation/dephosphorylation cycle. Regulates endoplasmic-to-Golgi trafficking of ceramides, resulting in the regulation of ceramide levels in the endoplasmic reticulum, preferentially long-chain ceramide species, and influences the anterograde membrane transport of both ceramide and proteins from the endoplasmic reticulum to the Golgi apparatus. The modulation of intracellular ceramide levels in turn regulates apoptosis. Via S1P levels, modulates resting tone, intracellular Ca(2+) and myogenic vasoconstriction in resistance arteries. Also involved in unfolded protein response (UPR) and ER stress-induced autophagy via regulation of intracellular S1P levels. Involved in the regulation of epidermal homeostasis and keratinocyte differentiation. The sequence is that of Sphingosine-1-phosphate phosphatase 1 from Rattus norvegicus (Rat).